The chain runs to 249 residues: DNA polymerase sliding clamp (249 aa).

Belongs to the PCNA family. In terms of assembly, homotrimer. The subunits circularize to form a toroid; DNA passes through its center. Replication factor C (RFC) is required to load the toroid on the DNA.

Sliding clamp subunit that acts as a moving platform for DNA processing. Responsible for tethering the catalytic subunit of DNA polymerase and other proteins to DNA during high-speed replication. The protein is DNA polymerase sliding clamp of Thermococcus sibiricus (strain DSM 12597 / MM 739).